The chain runs to 129 residues: Succinate dehydrogenase subunit 3-1, mitochondrial (129 aa).

The N-terminal 58 residues, 1–58 (MEKYHSNSRFAPFRDAPFALRGALGSSGSSFSSIDSLRRSSTLEQARGYTSRPLGAVR), are a transit peptide targeting the mitochondrion. Positions 25-35 (GSSGSSFSSID) are enriched in low complexity. The tract at residues 25 to 80 (GSSGSSFSSIDSLRRSSTLEQARGYTSRPLGAVRPKMLPSGCRPLHTSHPLSAPVA) is disordered. Heme is bound at residue His87. A helical membrane pass occupies residues 105 to 127 (IFGAALGAAIISIPLATKFSLMF).

Component of complex II composed of eight subunits in plants: four classical SDH subunits SDH1, SDH2, SDH3 and SDH4 (a flavoprotein (FP), an iron-sulfur protein (IP), and a cytochrome b composed of a large and a small subunit.), as well as four subunits unknown in mitochondria from bacteria and heterotrophic eukaryotes. Requires heme as cofactor.

It is found in the mitochondrion inner membrane. The protein operates within carbohydrate metabolism; tricarboxylic acid cycle. Its function is as follows. Membrane-anchoring subunit of succinate dehydrogenase (SDH). The sequence is that of Succinate dehydrogenase subunit 3-1, mitochondrial from Oryza sativa subsp. japonica (Rice).